We begin with the raw amino-acid sequence, 183 residues long: Calmodulin-like protein 3 (183 aa).

EF-hand domains lie at 7–42, 43–78, 80–115, and 116–151; these read EQIA…LGQS, PTEA…KLRD, GAED…LSDP, and LSDD…KRRQ. Ca(2+) is bound by residues aspartate 20, aspartate 22, aspartate 24, threonine 26, glutamate 31, aspartate 56, aspartate 58, serine 60, serine 62, glutamate 67, aspartate 93, aspartate 95, asparagine 97, glutamate 104, aspartate 129, aspartate 131, aspartate 133, glutamine 135, and glutamate 140. A disordered region spans residues 154–183; it reads MEGHGSGGHRSSNSHKKSGCCGPNSSCTIL. Residues cysteine 173 and cysteine 174 are each lipidated (S-palmitoyl cysteine). Cysteine 180 carries the post-translational modification Cysteine methyl ester. A lipid anchor (S-farnesyl cysteine) is attached at cysteine 180. Residues 181 to 183 constitute a propeptide, removed in mature form; sequence TIL.

This sequence belongs to the calmodulin family.

It is found in the membrane. Potential calcium sensor. The protein is Calmodulin-like protein 3 (CML3) of Oryza sativa subsp. japonica (Rice).